Reading from the N-terminus, the 124-residue chain is Phosphoribosyl-AMP cyclohydrolase (124 aa).

Residue aspartate 82 coordinates Mg(2+). Cysteine 83 provides a ligand contact to Zn(2+). Positions 84 and 86 each coordinate Mg(2+). Cysteine 99 and cysteine 106 together coordinate Zn(2+).

The protein belongs to the PRA-CH family. As to quaternary structure, homodimer. Mg(2+) serves as cofactor. It depends on Zn(2+) as a cofactor.

It localises to the cytoplasm. It carries out the reaction 1-(5-phospho-beta-D-ribosyl)-5'-AMP + H2O = 1-(5-phospho-beta-D-ribosyl)-5-[(5-phospho-beta-D-ribosylamino)methylideneamino]imidazole-4-carboxamide. Its pathway is amino-acid biosynthesis; L-histidine biosynthesis; L-histidine from 5-phospho-alpha-D-ribose 1-diphosphate: step 3/9. Catalyzes the hydrolysis of the adenine ring of phosphoribosyl-AMP. This Zymomonas mobilis subsp. mobilis (strain ATCC 31821 / ZM4 / CP4) protein is Phosphoribosyl-AMP cyclohydrolase.